We begin with the raw amino-acid sequence, 218 residues long: MELIRYADINSDLYRHIWVVGDIHGCYSLLLTRLAQLNFSPDTDLLISTGDNIDRGKENLETLRLLNTPWFISVVGNHEAMALDAFETQDGNFWYVNGGYWYDSVTEKDRQEATELLLTFKQRPHIIEVETSSKKYVIAHADYPDDSYDYGKQVDIDSVLWSRDRLLGSLQGNIHPIRGADTFIFGHMIVDYTTTFANQIYIDTGSFCSGNLSFFKIK.

4 residues coordinate Mn(2+): aspartate 22, histidine 24, aspartate 51, and asparagine 77. Histidine 78 (proton donor) is an active-site residue. Histidine 187 is a Mn(2+) binding site.

The protein belongs to the PPP phosphatase family. PP-1 subfamily. The cofactor is Mn(2+).

The enzyme catalyses O-phospho-L-seryl-[protein] + H2O = L-seryl-[protein] + phosphate. The catalysed reaction is O-phospho-L-threonyl-[protein] + H2O = L-threonyl-[protein] + phosphate. With respect to regulation, inhibited by cadmium, copper, zinc when added activity but with less efficiency. In terms of biological role, can hydrolyze phosphorylated Ser-, Thr- or Tyr-substrates in vitro. The natural substrate is unknown. The protein is Serine/threonine-protein phosphatase 2 (pphB) of Salmonella typhimurium (strain LT2 / SGSC1412 / ATCC 700720).